The chain runs to 373 residues: LIM domain-binding protein 2 (373 aa).

2 disordered regions span residues A244 to A287 and Q327 to Q373. Over residues S263–G280 the composition is skewed to low complexity. Residues D298 to E337 enclose the LIM interaction domain (LID) domain. Positions N341–Q373 are enriched in polar residues.

It belongs to the LDB family. As to quaternary structure, interacts with LHX9. Interacts with SLK; leading to negatively regulate SLK kinase activity. Interacts with LMO4. In terms of assembly, interacts with PITX1. Interacts with LHX3. In terms of processing, ubiquitinated by RLIM/RNF12, leading to its degradation by the proteasome. As to expression, expressed in multiple tissues including heart, brain, liver, kidney, testis, lung and muscle, with expression highest in the brain, trigeminal ganglia, and lung.

The protein resides in the nucleus. In terms of biological role, transcription cofactor. Binds to the LIM domain of a wide variety of LIM domain-containing transcription factors. Its function is as follows. Regulates the transcriptional activity of LIM-containing proteins such as LHX3 or PITX1. In Mus musculus (Mouse), this protein is LIM domain-binding protein 2 (Ldb2).